The following is a 189-amino-acid chain: Elongation factor P (189 aa).

Belongs to the elongation factor P family.

The protein localises to the cytoplasm. The protein operates within protein biosynthesis; polypeptide chain elongation. Involved in peptide bond synthesis. Stimulates efficient translation and peptide-bond synthesis on native or reconstituted 70S ribosomes in vitro. Probably functions indirectly by altering the affinity of the ribosome for aminoacyl-tRNA, thus increasing their reactivity as acceptors for peptidyl transferase. The sequence is that of Elongation factor P from Rhizobium radiobacter (Agrobacterium tumefaciens).